A 507-amino-acid polypeptide reads, in one-letter code: 2,3-bisphosphoglycerate-independent phosphoglycerate mutase (507 aa).

Positions 13 and 63 each coordinate Mn(2+). The active-site Phosphoserine intermediate is the S63. Substrate is bound by residues H122, 152–153 (RD), R184, R190, 256–259 (RADR), and K330. Residues D397, H401, D438, H439, and H457 each contribute to the Mn(2+) site.

The protein belongs to the BPG-independent phosphoglycerate mutase family. In terms of assembly, monomer. Mn(2+) serves as cofactor.

The catalysed reaction is (2R)-2-phosphoglycerate = (2R)-3-phosphoglycerate. It functions in the pathway carbohydrate degradation; glycolysis; pyruvate from D-glyceraldehyde 3-phosphate: step 3/5. In terms of biological role, catalyzes the interconversion of 2-phosphoglycerate and 3-phosphoglycerate. This chain is 2,3-bisphosphoglycerate-independent phosphoglycerate mutase, found in Chromobacterium violaceum (strain ATCC 12472 / DSM 30191 / JCM 1249 / CCUG 213 / NBRC 12614 / NCIMB 9131 / NCTC 9757 / MK).